Here is a 988-residue protein sequence, read N- to C-terminus: DExH-box ATP-dependent RNA helicase DExH9 (988 aa).

The disordered stretch occupies residues Met-1–Ser-27. One can recognise a Helicase ATP-binding domain in the interval Ile-76 to Cys-232. Ala-89–Thr-96 contacts ATP. The short motif at Asp-180–His-183 is the DEVH box element. A Helicase C-terminal domain is found at Asp-307–Arg-509.

The protein belongs to the DExH box helicase family. SKI2 subfamily. In terms of tissue distribution, ubiquitous but preferentially expressed in active tissues.

The protein resides in the nucleus. It is found in the nucleolus. The catalysed reaction is ATP + H2O = ADP + phosphate + H(+). Functionally, ATP-dependent RNA helicase that associates with the RNA exosome complex. Required for proper rRNA biogenesis and development. Involved in the 3'-processing of the 7S pre-RNA to the mature 5.8S rRNA and also in the removal of rRNA maturation by-products. This is DExH-box ATP-dependent RNA helicase DExH9 from Arabidopsis thaliana (Mouse-ear cress).